Here is a 191-residue protein sequence, read N- to C-terminus: Large ribosomal subunit protein uL6 (191 aa).

The protein belongs to the universal ribosomal protein uL6 family. In terms of assembly, component of the large ribosomal subunit. Mature ribosomes consist of a small (40S) and a large (60S) subunit. The 40S subunit contains about 32 different proteins and 1 molecule of RNA (18S). The 60S subunit contains 45 different proteins and 3 molecules of RNA (25S, 5.8S and 5S).

The protein resides in the cytoplasm. Its function is as follows. Component of the ribosome, a large ribonucleoprotein complex responsible for the synthesis of proteins in the cell. The small ribosomal subunit (SSU) binds messenger RNAs (mRNAs) and translates the encoded message by selecting cognate aminoacyl-transfer RNA (tRNA) molecules. The large subunit (LSU) contains the ribosomal catalytic site termed the peptidyl transferase center (PTC), which catalyzes the formation of peptide bonds, thereby polymerizing the amino acids delivered by tRNAs into a polypeptide chain. The nascent polypeptides leave the ribosome through a tunnel in the LSU and interact with protein factors that function in enzymatic processing, targeting, and the membrane insertion of nascent chains at the exit of the ribosomal tunnel. The protein is Large ribosomal subunit protein uL6 of Candida albicans (strain SC5314 / ATCC MYA-2876) (Yeast).